Here is a 198-residue protein sequence, read N- to C-terminus: MSAEEKNLIEILEEGHKVDVVKYIDYVSAPQAGAIATFSGTTRDMFEGKTVLELRYEAYVPMATRCLSSICTTARSTWDIHKIAVAHRLGPVPVGETSVLIAVSSVHRADGLDACKFLIDELKASVPIWKKEVYTNGEIWKENSEFMEKRLELAEKRDSIVKKTVVEEHRRRGCCGSKVRVEEDEEHKDITGDNKSSS.

Substrate contacts are provided by residues 107 to 108 (HR), K123, and 130 to 132 (KKE).

This sequence belongs to the MoaE family. MOCS2B subfamily. As to quaternary structure, heterotetramer; composed of 2 small (MOCS2A) and 2 large (MOCS2B) subunits.

Its subcellular location is the cytoplasm. It carries out the reaction 2 [molybdopterin-synthase sulfur-carrier protein]-C-terminal-Gly-aminoethanethioate + cyclic pyranopterin phosphate + H2O = molybdopterin + 2 [molybdopterin-synthase sulfur-carrier protein]-C-terminal Gly-Gly + 2 H(+). It functions in the pathway cofactor biosynthesis; molybdopterin biosynthesis. Functionally, catalytic subunit of the molybdopterin synthase complex, a complex that catalyzes the conversion of precursor Z into molybdopterin. Acts by mediating the incorporation of 2 sulfur atoms from thiocarboxylated MOCS2A into precursor Z to generate a dithiolene group. In Arabidopsis thaliana (Mouse-ear cress), this protein is Molybdopterin synthase catalytic subunit.